Consider the following 331-residue polypeptide: Probable serine hydrolase (331 aa).

A disordered region spans residues 1-28 (MGQTRVAATTAAQSPAAELSPETNGQTE). Residues 7-17 (AATTAAQSPAA) show a composition bias toward low complexity. The 101-residue stretch at 63-163 (PIIALHGWQD…EVEKLINIDI (101 aa)) folds into the AB hydrolase-1 domain. Residue Ser138 is part of the active site.

It belongs to the AB hydrolase superfamily. As to expression, ubiquitously expressed before embryonic stage 11. At stage 11, expression is concentrated in the foregut and posterior midgut. By stage 15, in gastric caeca, pharynx, posterior spiracles and anterior edge of midgut. At the end of embryogenesis, expression is confined to gastric caeca. During third instar larvae, expressed at low levels in gastric caeca, midgut and hindgut and high level in fat body.

Functionally, may have a role in detoxification and digestion during embryogenesis and larval development. In Drosophila melanogaster (Fruit fly), this protein is Probable serine hydrolase (kraken).